Reading from the N-terminus, the 156-residue chain is Calglandulin (156 aa).

4 EF-hand domains span residues 8-43 (EQIT…VGIN), 44-79 (PTKR…YHEK), 82-117 (NQDE…AGEP), and 118-153 (LNEQ…ESFK). Ca(2+) is bound by residues Asp131, Asp133, Asp135, Thr137, and Glu142.

It belongs to the calmodulin family. Calglandulin subfamily. As to expression, expressed by the venom gland.

It localises to the cytoplasm. May be involved in the cellular control mechanism of the secretion of toxins from the gland into the venom. This Bothrops insularis (Golden lancehead) protein is Calglandulin.